A 291-amino-acid polypeptide reads, in one-letter code: 4-diphosphocytidyl-2-C-methyl-D-erythritol kinase (291 aa).

Lys-10 is an active-site residue. Position 94–104 (94–104) interacts with ATP; sequence PVSAGLAGGSS. Asp-136 is an active-site residue.

The protein belongs to the GHMP kinase family. IspE subfamily.

It carries out the reaction 4-CDP-2-C-methyl-D-erythritol + ATP = 4-CDP-2-C-methyl-D-erythritol 2-phosphate + ADP + H(+). The protein operates within isoprenoid biosynthesis; isopentenyl diphosphate biosynthesis via DXP pathway; isopentenyl diphosphate from 1-deoxy-D-xylulose 5-phosphate: step 3/6. Catalyzes the phosphorylation of the position 2 hydroxy group of 4-diphosphocytidyl-2C-methyl-D-erythritol. The chain is 4-diphosphocytidyl-2-C-methyl-D-erythritol kinase from Listeria monocytogenes serotype 4a (strain HCC23).